The sequence spans 271 residues: Glutamate racemase (271 aa).

Substrate is bound by residues 13–14 (DS) and 45–46 (YG). Residue Cys77 is the Proton donor/acceptor of the active site. Residue 78-79 (NT) coordinates substrate. Cys192 (proton donor/acceptor) is an active-site residue. 193-194 (TH) lines the substrate pocket.

This sequence belongs to the aspartate/glutamate racemases family.

The catalysed reaction is L-glutamate = D-glutamate. The protein operates within cell wall biogenesis; peptidoglycan biosynthesis. Provides the (R)-glutamate required for cell wall biosynthesis. This Sinorhizobium medicae (strain WSM419) (Ensifer medicae) protein is Glutamate racemase.